We begin with the raw amino-acid sequence, 99 residues long: RING finger protein Z (99 aa).

Gly2 carries the N-myristoyl glycine; by host lipid modification. The RING-type; atypical zinc finger occupies 31–67; it reads CKSCWFENKGLVECNNHYLCLNCLTLLLSVSNRCPIC. The tract at residues 74-99 is disordered; the sequence is KLRPSAAPTAPPTGAADSIRPPPYSP. Over residues 77-89 the composition is skewed to low complexity; sequence PSAAPTAPPTGAA. Positions 81–84 match the PTAP/PSAP motif motif; that stretch reads PTAP. The short motif at 94–97 is the PPXY motif element; it reads PPPY.

It belongs to the arenaviridae Z protein family. In terms of assembly, interacts with protein NP; this interaction probably directs the encapsidated genome to budding sites. Interacts (via RING domain) with polymerase L; this interaction inhibits viral transcription and replication, Z partially blocks the product exit tunnel for the releasing nascent RNA product. Interacts with the glycoprotein complex; this interaction plays a role in virion budding. Interacts with host eIF4E; this interaction results in eIF4E reduced affinity for its substrate, the 5'-m7 G cap structure. Interacts (via late-budding domain) with host TSG101; this interaction is essential for budding and release of viral particles. Interacts with host RPLP0; this interaction may serve to load ribosome-like particles inside the virion. Interacts with host PML; this interaction induces PML bodies redistribution in the cytoplasm upon viral infection. Interacts with host TAX1BP1. Myristoylation is required for the role of RING finger protein Z in assembly and budding.

It localises to the virion. The protein resides in the host cytoplasm. The protein localises to the host perinuclear region. It is found in the host cell membrane. Plays a crucial role in virion assembly and budding. Expressed late in the virus life cycle, it acts as an inhibitor of viral transcription and RNA synthesis by interacting with the viral polymerase L. Presumably recruits the NP encapsidated genome to cellular membranes at budding sites via direct interaction with NP. Plays critical roles in the final steps of viral release by interacting with host TSG101, a member of the vacuolar protein-sorting pathway and using other cellular host proteins involved in vesicle formation pathway. The budding of the virus progeny occurs after association of protein Z with the viral glycoprotein complex SSP-GP1-GP2 at the cell periphery, step that requires myristoylation of protein Z. Also selectively represses protein production by associating with host eIF4E. In cell-based minigenome assay, has an inhibitory effect on the ribonucleoprotein machinery (vRNP), which is responsible for the replication and transcription of the viral genome. This chain is RING finger protein Z, found in Homo sapiens (Human).